Here is a 302-residue protein sequence, read N- to C-terminus: Putative S-adenosyl-L-methionine-dependent methyltransferase MAP_1622c (302 aa).

S-adenosyl-L-methionine contacts are provided by residues Asp129 and 158–159; that span reads DL.

Belongs to the UPF0677 family.

Its function is as follows. Exhibits S-adenosyl-L-methionine-dependent methyltransferase activity. The sequence is that of Putative S-adenosyl-L-methionine-dependent methyltransferase MAP_1622c from Mycolicibacterium paratuberculosis (strain ATCC BAA-968 / K-10) (Mycobacterium paratuberculosis).